The primary structure comprises 187 residues: MTTTEKVQPRLKERYRNEIRDSLQQQFGSANVMQIPTVTKVVVNMGIGEAARDAKLINGAVNDLALITGQRPEIRRARKSIAQFKLREGMPIGARVTLRGDRMWEFLDRLTSIALPRIRDFRGLSSKQFDGVGNYTFGLAEQSVFHEIDVDKIDRVRGMDINVVTSATTDDEGRALLRALGFPFKEN.

Belongs to the universal ribosomal protein uL5 family. Part of the 50S ribosomal subunit; part of the 5S rRNA/L5/L18/L25 subcomplex. Contacts the 5S rRNA and the P site tRNA. Forms a bridge to the 30S subunit in the 70S ribosome.

Its function is as follows. This is one of the proteins that bind and probably mediate the attachment of the 5S RNA into the large ribosomal subunit, where it forms part of the central protuberance. In the 70S ribosome it contacts protein S13 of the 30S subunit (bridge B1b), connecting the 2 subunits; this bridge is implicated in subunit movement. Contacts the P site tRNA; the 5S rRNA and some of its associated proteins might help stabilize positioning of ribosome-bound tRNAs. This is Large ribosomal subunit protein uL5 from Mycolicibacterium paratuberculosis (strain ATCC BAA-968 / K-10) (Mycobacterium paratuberculosis).